A 269-amino-acid polypeptide reads, in one-letter code: Arginine and glutamate-rich protein 1-B (269 aa).

Residues 1-57 are compositionally biased toward basic residues; the sequence is MGRSRSRSSSRSKHSKTSKHSKKRSRSRSRSRDRERKRRSKSRESKRNRRRESRSRS. The necessary and sufficient for RNA binding stretch occupies residues 1–70; that stretch reads MGRSRSRSSS…TATSRRDRER (70 aa). Disordered stretches follow at residues 1 to 109 and 233 to 269; these read MGRS…MERQ and RMKL…KASE. 3 stretches are compositionally biased toward basic and acidic residues: residues 64 to 80, 89 to 109, and 233 to 249; these read SRRD…RIDI, SAVD…MERQ, and RMKL…EEQK. The segment at 71 to 269 is necessary and sufficient for transcriptional regulation; it reads AASPPERIDI…KLSFSLKASE (199 aa).

The protein belongs to the ARGLU1 family.

It localises to the nucleus. Its subcellular location is the nucleus speckle. The protein resides in the chromosome. Its function is as follows. Dual function regulator of gene expression; regulator of transcription and modulator of alternative splicing. General coactivator of nuclear receptor-induced gene expression. This chain is Arginine and glutamate-rich protein 1-B (arglu1b), found in Danio rerio (Zebrafish).